The following is a 272-amino-acid chain: NADPH-dependent 7-cyano-7-deazaguanine reductase (272 aa).

82-84 (IES) contacts substrate. 84 to 85 (SK) provides a ligand contact to NADPH. Cys-178 serves as the catalytic Thioimide intermediate. Asp-185 functions as the Proton donor in the catalytic mechanism. 217-218 (HE) provides a ligand contact to substrate. Position 246 to 247 (246 to 247 (RG)) interacts with NADPH.

It belongs to the GTP cyclohydrolase I family. QueF type 2 subfamily. Homodimer.

It localises to the cytoplasm. The enzyme catalyses 7-aminomethyl-7-carbaguanine + 2 NADP(+) = 7-cyano-7-deazaguanine + 2 NADPH + 3 H(+). Its pathway is tRNA modification; tRNA-queuosine biosynthesis. Functionally, catalyzes the NADPH-dependent reduction of 7-cyano-7-deazaguanine (preQ0) to 7-aminomethyl-7-deazaguanine (preQ1). This chain is NADPH-dependent 7-cyano-7-deazaguanine reductase, found in Stenotrophomonas maltophilia (strain R551-3).